The primary structure comprises 529 residues: Bifunctional purine biosynthesis protein PurH (529 aa).

An MGS-like domain is found at 1–148 (MQQRRPVRRA…KNHKDVAIVV (148 aa)).

It belongs to the PurH family.

It catalyses the reaction (6R)-10-formyltetrahydrofolate + 5-amino-1-(5-phospho-beta-D-ribosyl)imidazole-4-carboxamide = 5-formamido-1-(5-phospho-D-ribosyl)imidazole-4-carboxamide + (6S)-5,6,7,8-tetrahydrofolate. It carries out the reaction IMP + H2O = 5-formamido-1-(5-phospho-D-ribosyl)imidazole-4-carboxamide. Its pathway is purine metabolism; IMP biosynthesis via de novo pathway; 5-formamido-1-(5-phospho-D-ribosyl)imidazole-4-carboxamide from 5-amino-1-(5-phospho-D-ribosyl)imidazole-4-carboxamide (10-formyl THF route): step 1/1. It functions in the pathway purine metabolism; IMP biosynthesis via de novo pathway; IMP from 5-formamido-1-(5-phospho-D-ribosyl)imidazole-4-carboxamide: step 1/1. This is Bifunctional purine biosynthesis protein PurH from Salmonella paratyphi C (strain RKS4594).